The following is a 263-amino-acid chain: Urease accessory protein UreD 1 (263 aa).

This sequence belongs to the UreD family. In terms of assembly, ureD, UreF and UreG form a complex that acts as a GTP-hydrolysis-dependent molecular chaperone, activating the urease apoprotein by helping to assemble the nickel containing metallocenter of UreC. The UreE protein probably delivers the nickel.

The protein resides in the cytoplasm. Required for maturation of urease via the functional incorporation of the urease nickel metallocenter. This chain is Urease accessory protein UreD 1, found in Synechococcus sp. (strain JA-3-3Ab) (Cyanobacteria bacterium Yellowstone A-Prime).